The following is a 240-amino-acid chain: Uridylate kinase (240 aa).

An ATP-binding site is contributed by 12–15; it reads KLSG. A UMP-binding site is contributed by glycine 54. 2 residues coordinate ATP: glycine 55 and arginine 59. UMP contacts are provided by residues aspartate 74 and 135-142; that span reads TGNPFFTT. Threonine 162, tyrosine 168, and aspartate 171 together coordinate ATP.

It belongs to the UMP kinase family. As to quaternary structure, homohexamer.

Its subcellular location is the cytoplasm. The enzyme catalyses UMP + ATP = UDP + ADP. Its pathway is pyrimidine metabolism; CTP biosynthesis via de novo pathway; UDP from UMP (UMPK route): step 1/1. With respect to regulation, inhibited by UTP. Its function is as follows. Catalyzes the reversible phosphorylation of UMP to UDP. This Xanthomonas oryzae pv. oryzae (strain KACC10331 / KXO85) protein is Uridylate kinase.